The sequence spans 161 residues: UPF0178 protein PXO_00400 (161 aa).

It belongs to the UPF0178 family.

This Xanthomonas oryzae pv. oryzae (strain PXO99A) protein is UPF0178 protein PXO_00400.